The chain runs to 350 residues: GTPase Obg (350 aa).

Residues Met1 to Ile159 enclose the Obg domain. One can recognise an OBG-type G domain in the interval Ala160–Thr328. GTP-binding positions include Gly166–Ser173, Phe191–His195, Asp213–Gly216, Asn280–Asp283, and Ser309–Val311. Mg(2+) contacts are provided by Ser173 and Thr193. The disordered stretch occupies residues Arg331 to Ala350.

This sequence belongs to the TRAFAC class OBG-HflX-like GTPase superfamily. OBG GTPase family. As to quaternary structure, monomer. Requires Mg(2+) as cofactor.

The protein localises to the cytoplasm. Functionally, an essential GTPase which binds GTP, GDP and possibly (p)ppGpp with moderate affinity, with high nucleotide exchange rates and a fairly low GTP hydrolysis rate. Plays a role in control of the cell cycle, stress response, ribosome biogenesis and in those bacteria that undergo differentiation, in morphogenesis control. The protein is GTPase Obg of Gluconacetobacter diazotrophicus (strain ATCC 49037 / DSM 5601 / CCUG 37298 / CIP 103539 / LMG 7603 / PAl5).